A 446-amino-acid polypeptide reads, in one-letter code: Phosphoglucosamine mutase (446 aa).

Catalysis depends on Ser103, which acts as the Phosphoserine intermediate. Mg(2+) contacts are provided by Ser103, Asp242, Asp244, and Asp246. The residue at position 103 (Ser103) is a Phosphoserine.

The protein belongs to the phosphohexose mutase family. Mg(2+) serves as cofactor. Activated by phosphorylation.

The enzyme catalyses alpha-D-glucosamine 1-phosphate = D-glucosamine 6-phosphate. Its function is as follows. Catalyzes the conversion of glucosamine-6-phosphate to glucosamine-1-phosphate. This chain is Phosphoglucosamine mutase, found in Vibrio vulnificus (strain CMCP6).